We begin with the raw amino-acid sequence, 549 residues long: Eukaryotic translation initiation factor 4B2 (549 aa).

Disordered regions lie at residues 1 to 446 and 465 to 549; these read MSKP…DLIR and FRPR…REGW. Low complexity predominate over residues 24–46; that stretch reads AEATATAADSQSFPSLKEAATAK. 2 stretches are compositionally biased toward gly residues: residues 96–109 and 126–136; these read RLGG…GGRS and SWGGGGGGRRS. Residues 169–176 carry the Nuclear localization signal 1 motif; the sequence is GKKSLPSF. Residues 184–218 are compositionally biased toward gly residues; it reads RYGGGGGSFGGGGGGGAGSYGGGGAGAGSGGGGGF. The short motif at 234 to 241 is the Nuclear localization signal 2 element; the sequence is SSTFGSGF. The span at 263 to 278 shows a compositional bias: basic and acidic residues; that stretch reads QEERRRLVFEPRKADT. Positions 281–292 are enriched in polar residues; the sequence is SETPTAVKTSKP. Residues 299 to 323 show a composition bias toward basic and acidic residues; it reads RPREQVLAEKGLDWKKLDSDIEAKK. Residues 327-349 are compositionally biased toward low complexity; the sequence is SRPSSAQSSRPSSAQSNRSESSA. Basic and acidic residues-rich tracts occupy residues 369 to 431, 485 to 507, and 518 to 549; these read AKPR…KESQ, ERPH…ERPR, and PVDD…REGW.

The protein belongs to the eIF-4 subunit B family. In terms of assembly, homodimer. Nonspherical monomer. mRNA-discriminating component of initiation complexes. Phosphorylated.

It localises to the nucleus. Its function is as follows. Promotes the eIF4F and eIF4A RNA-dependent ATP-hydrolysis activity with different efficiency depending on mRNAs, thus providing mRNA discrimination during initiation of translation. This Arabidopsis thaliana (Mouse-ear cress) protein is Eukaryotic translation initiation factor 4B2.